An 86-amino-acid polypeptide reads, in one-letter code: uncharacterized protein (86 aa).

This is an uncharacterized protein from Bacillus subtilis (strain 168).